Here is a 689-residue protein sequence, read N- to C-terminus: Pentatricopeptide repeat-containing protein At1g71460, chloroplastic (689 aa).

The transit peptide at 1–49 (MEVVSSLGIRDLPASLSVTTSLNHRPHRSDKDGAPAKSPIRPSRTRRPS) directs the protein to the chloroplast. Residues 16 to 68 (LSVTTSLNHRPHRSDKDGAPAKSPIRPSRTRRPSTSPAKKPKPFRERDAFPSS) form a disordered region. The span at 38-52 (SPIRPSRTRRPSTSP) shows a compositional bias: low complexity. 18 PPR repeats span residues 75-109 (NPYIIHRDIQIFARQNNLEVALTILDYLEQRGIPV), 110-144 (NATTFSALLEACVRRKSLLHGKQVHVHIRINGLES), 145-175 (NEFLRTKLVHMYTACGSVKDAQKVFDESTSS), 176-212 (NVYSWNALLRGTVISGKKRYQDVLSTFTEMRELGVDL), 213-247 (NVYSLSNVFKSFAGASALRQGLKTHALAIKNGLFN), 248-282 (SVFLKTSLVDMYFKCGKVGLARRVFDEIVERDIVV), 283-309 (WGAMIAGLAHNKRQWEALGLFRTMISE), 315-350 (NSVILTTILPVLGDVKALKLGKEVHAHVLKSKNYVE), 351-381 (QPFVHSGLIDLYCKCGDMASGRRVFYGSKQR), 382-416 (NAISWTALMSGYAANGRFDQALRSIVWMQQEGFRP), 417-451 (DVVTIATVLPVCAELRAIKQGKEIHCYALKNLFLP), 452-482 (NVSLVTSLMVMYSKCGVPEYPIRLFDRLEQR), 483-517 (NVKAWTAMIDCYVENCDLRAGIEVFRLMLLSKHRP), 518-552 (DSVTMGRVLTVCSDLKALKLGKELHGHILKKEFES), 553-583 (IPFVSARIIKMYGKCGDLRSANFSFDAVAVK), 584-618 (GSLTWTAIIEAYGCNELFRDAINCFEQMVSRGFTP), 619-649 (NTFTFTAVLSICSQAGFVDEAYRFFNLMLRM), and 655-689 (SEEHYSLVIELLNRCGRVEEAQRLAVMSSSSSLQT).

The protein belongs to the PPR family. PCMP-A subfamily.

It is found in the plastid. The protein resides in the chloroplast. The polypeptide is Pentatricopeptide repeat-containing protein At1g71460, chloroplastic (PCMP-A3) (Arabidopsis thaliana (Mouse-ear cress)).